A 250-amino-acid chain; its full sequence is Probable transcriptional regulatory protein Mmc1_0479 (250 aa).

It belongs to the TACO1 family.

The protein resides in the cytoplasm. The sequence is that of Probable transcriptional regulatory protein Mmc1_0479 from Magnetococcus marinus (strain ATCC BAA-1437 / JCM 17883 / MC-1).